Consider the following 217-residue polypeptide: Pyrophosphatase PpaX (217 aa).

Aspartate 11 functions as the Nucleophile in the catalytic mechanism.

This sequence belongs to the HAD-like hydrolase superfamily. PpaX family. Requires Mg(2+) as cofactor.

It catalyses the reaction diphosphate + H2O = 2 phosphate + H(+). Its function is as follows. Hydrolyzes pyrophosphate formed during P-Ser-HPr dephosphorylation by HPrK/P. Might play a role in controlling the intracellular pyrophosphate pool. The sequence is that of Pyrophosphatase PpaX from Listeria monocytogenes serotype 4a (strain HCC23).